A 57-amino-acid polypeptide reads, in one-letter code: UPF0337 protein SAV_1088 (57 aa).

Composition is skewed to basic and acidic residues over residues 1 to 15 (MAGD…EQAK) and 36 to 57 (QAEK…VFKH). Residues 1–57 (MAGDQKAKAKMEQAKGKAKAAAGRAVGNERMAAEGQAEKSKGDARQAKEKTKDVFKH) form a disordered region.

The protein belongs to the UPF0337 (CsbD) family.

This is UPF0337 protein SAV_1088 from Streptomyces avermitilis (strain ATCC 31267 / DSM 46492 / JCM 5070 / NBRC 14893 / NCIMB 12804 / NRRL 8165 / MA-4680).